Reading from the N-terminus, the 121-residue chain is Small ribosomal subunit protein uS13 (121 aa).

The tract at residues 93 to 121 (RGLPMRGQRTRTNARTRKGPRKAAQSLKK) is disordered.

The protein belongs to the universal ribosomal protein uS13 family. As to quaternary structure, part of the 30S ribosomal subunit. Forms a loose heterodimer with protein S19. Forms two bridges to the 50S subunit in the 70S ribosome.

Located at the top of the head of the 30S subunit, it contacts several helices of the 16S rRNA. In the 70S ribosome it contacts the 23S rRNA (bridge B1a) and protein L5 of the 50S subunit (bridge B1b), connecting the 2 subunits; these bridges are implicated in subunit movement. Contacts the tRNAs in the A and P-sites. The chain is Small ribosomal subunit protein uS13 from Variovorax paradoxus (strain S110).